A 311-amino-acid polypeptide reads, in one-letter code: Aquaporin-1 (311 aa).

The Cytoplasmic segment spans residues 1 to 16 (MHPQVASLFDNVYEDL). Residues 17-37 (AAATLEFIGTAFFLLFGLGGI) form a helical membrane-spanning segment. The Extracellular segment spans residues 38–56 (QASTAEDTASSQPPASGIE). The helical transmembrane segment at 57–77 (HVLYISTCMGFSLVVSAWLFF) threads the bilayer. Residue Arg-78 is a topological domain, cytoplasmic. A helical membrane pass occupies residues 79–99 (VTGGLFNPNISFALLLVGGLK). The NPA 1 motif lies at 85–87 (NPN). Position 100 (Pro-100) is a topological domain, extracellular. A helical membrane pass occupies residues 101–121 (LRFVLFCIAQLTGAIAGAAIV). At 122-143 (RGLTSAPLSVNNVLQQGTSAAQ) the chain is on the cytoplasmic side. A helical membrane pass occupies residues 144 to 164 (GVFIEMFITAALVLSVLMLAA). Over 165 to 168 (EKHE) the chain is Extracellular. The chain crosses the membrane as a helical span at residues 169–189 (ATPFAPVGIGLTLFACHLFAV). Residues 190–215 (YYTGAAMNSARAFGPAVISGFPEPQH) lie on the Cytoplasmic side of the membrane. The NPA 2 motif lies at 197–199 (NSA). The helical transmembrane segment at 216–236 (WVYWVGPFLGSLLGAGFYATL) threads the bilayer. Residues 237–311 (KHYKYWRLNP…TSSRTNFSPV (75 aa)) are Extracellular-facing. Residues 276–311 (DEETRNGCASNEEGVRATGDEKSSNATSSRTNFSPV) form a disordered region. The span at 288 to 298 (EGVRATGDEKS) shows a compositional bias: basic and acidic residues. Polar residues predominate over residues 299–311 (SNATSSRTNFSPV). Asn-300 carries an N-linked (GlcNAc...) asparagine glycan.

Belongs to the MIP/aquaporin (TC 1.A.8) family.

The protein resides in the cell membrane. The enzyme catalyses H2O(in) = H2O(out). The catalysed reaction is H2O2(out) = H2O2(in). It carries out the reaction nitric oxide(out) = nitric oxide(in). It catalyses the reaction CO2(out) = CO2(in). Its function is as follows. Water channel required to facilitate the transport of water across membranes. Also mediates the transport nitric oxide, hydrogen peroxide and carbon dioxide across the membrane. Required for Hartig net development in trembling aspen trees. Contributes in fungal cellular processes during the basidiocarp formation. The protein is Aquaporin-1 of Laccaria bicolor (Bicoloured deceiver).